Consider the following 349-residue polypeptide: Dihydroorotate dehydrogenase (quinone) (349 aa).

FMN-binding positions include 59-63 (PGFDK) and Thr83. Lys63 lines the substrate pocket. Substrate is bound at residue 108 to 112 (NRMGF). Residues Asn142 and Asn173 each contribute to the FMN site. Asn173 is a substrate binding site. The Nucleophile role is filled by Ser176. Residue Asn178 participates in substrate binding. FMN is bound by residues Lys212 and Ser240. 241–242 (NT) is a binding site for substrate. FMN is bound by residues Gly262, Gly291, and 312-313 (YS).

It belongs to the dihydroorotate dehydrogenase family. Type 2 subfamily. As to quaternary structure, monomer. It depends on FMN as a cofactor.

The protein localises to the cell membrane. It catalyses the reaction (S)-dihydroorotate + a quinone = orotate + a quinol. It functions in the pathway pyrimidine metabolism; UMP biosynthesis via de novo pathway; orotate from (S)-dihydroorotate (quinone route): step 1/1. In terms of biological role, catalyzes the conversion of dihydroorotate to orotate with quinone as electron acceptor. The polypeptide is Dihydroorotate dehydrogenase (quinone) (Novosphingobium aromaticivorans (strain ATCC 700278 / DSM 12444 / CCUG 56034 / CIP 105152 / NBRC 16084 / F199)).